A 342-amino-acid chain; its full sequence is Forkhead box protein D5-C (342 aa).

Residues 1-89 (MNLSQDSSAH…KHSLDTTTNG (89 aa)) form a disordered region. Acidic residues predominate over residues 20–34 (SDDEDEIDILGEDDP). Over residues 59–70 (SKLSCNESASHS) the composition is skewed to polar residues. Positions 71 to 83 (SGERERGTSKHSL) are enriched in basic and acidic residues. Residues 97-191 (KPPYSYIALI…DNGSFLRRRK (95 aa)) constitute a DNA-binding region (fork-head).

As to expression, at the onset of gastrulation, expressed in the superficial layer of cells in the dorsal blastopore lip (Spemann organizer). In the open neural plate, expressed in a row of cells destined to become the floor plate of the neural tube. After neural tube closure, only detected in the tailtip and a small area located at the midbrain/hindbrain boundary.

Its subcellular location is the nucleus. Transcriptional repressor. This chain is Forkhead box protein D5-C (foxd5-c), found in Xenopus laevis (African clawed frog).